The chain runs to 93 residues: uncharacterized protein (93 aa).

This is an uncharacterized protein from Pasteurella multocida (strain Pm70).